We begin with the raw amino-acid sequence, 317 residues long: Protein phosphatase PTC7 homolog fig (317 aa).

Residues 46–312 (PYLVTVVQGR…DDITLILASV (267 aa)) form the PPM-type phosphatase domain. Mn(2+) is bound by residues aspartate 90, glycine 91, and aspartate 235.

It belongs to the PP2C family. Requires Mg(2+) as cofactor. The cofactor is Mn(2+).

It catalyses the reaction O-phospho-L-seryl-[protein] + H2O = L-seryl-[protein] + phosphate. The enzyme catalyses O-phospho-L-threonyl-[protein] + H2O = L-threonyl-[protein] + phosphate. In Drosophila erecta (Fruit fly), this protein is Protein phosphatase PTC7 homolog fig.